The primary structure comprises 289 residues: MYB transcription factor 69 (289 aa).

2 consecutive HTH myb-type domains span residues 9–61 (KAGV…TNYL) and 62–116 (RPGI…KKKL). 2 DNA-binding regions (H-T-H motif) span residues 37–61 (WRAV…TNYL) and 89–112 (WAAI…NTHL). Disordered regions lie at residues 127–162 (APPR…ADST) and 225–252 (SSAI…QQQQ). The segment covering 139–154 (ADCRRHDMTRSSKDSH) has biased composition (basic and acidic residues).

As to expression, mainly expressed in highly lignified tissues such as vascular tissues.

It is found in the nucleus. Transcription factor that binds to the promoter of MYB31 and MYB42 and activates directly their expression, thus repressing lignin biosynthesis. In Zea mays (Maize), this protein is MYB transcription factor 69.